The sequence spans 564 residues: Malignant brain tumor repeat protein 1 (564 aa).

MBT repeat units follow at residues Phe-64–Leu-176, Arg-205–Thr-327, Leu-331–Leu-442, and Phe-450–Pro-549.

As to quaternary structure, interacts with histone H3 that is trimethylated at 'Lys-9' (H3K9me3).

This Caenorhabditis elegans protein is Malignant brain tumor repeat protein 1 (mbtr-1).